Here is a 449-residue protein sequence, read N- to C-terminus: Phosphoglucosamine mutase (449 aa).

Catalysis depends on serine 100, which acts as the Phosphoserine intermediate. Mg(2+)-binding residues include serine 100, aspartate 241, aspartate 243, and aspartate 245. Serine 100 is modified (phosphoserine).

It belongs to the phosphohexose mutase family. Mg(2+) is required as a cofactor. Activated by phosphorylation.

It carries out the reaction alpha-D-glucosamine 1-phosphate = D-glucosamine 6-phosphate. Functionally, catalyzes the conversion of glucosamine-6-phosphate to glucosamine-1-phosphate. This Clostridium botulinum (strain ATCC 19397 / Type A) protein is Phosphoglucosamine mutase.